The following is a 407-amino-acid chain: 1-deoxy-D-xylulose 5-phosphate reductoisomerase (407 aa).

Residues Thr-25, Gly-26, Ser-27, Ile-28, Asn-53, and Asn-136 each coordinate NADPH. Lys-137 lines the 1-deoxy-D-xylulose 5-phosphate pocket. Position 138 (Glu-138) interacts with NADPH. Position 162 (Asp-162) interacts with Mn(2+). Positions 163, 164, 188, and 211 each coordinate 1-deoxy-D-xylulose 5-phosphate. Glu-164 lines the Mn(2+) pocket. Gly-217 is a binding site for NADPH. Ser-224, Asn-229, Lys-230, and Glu-233 together coordinate 1-deoxy-D-xylulose 5-phosphate. Glu-233 is a binding site for Mn(2+).

Belongs to the DXR family. Requires Mg(2+) as cofactor. Mn(2+) is required as a cofactor.

It carries out the reaction 2-C-methyl-D-erythritol 4-phosphate + NADP(+) = 1-deoxy-D-xylulose 5-phosphate + NADPH + H(+). The protein operates within isoprenoid biosynthesis; isopentenyl diphosphate biosynthesis via DXP pathway; isopentenyl diphosphate from 1-deoxy-D-xylulose 5-phosphate: step 1/6. Functionally, catalyzes the NADPH-dependent rearrangement and reduction of 1-deoxy-D-xylulose-5-phosphate (DXP) to 2-C-methyl-D-erythritol 4-phosphate (MEP). This is 1-deoxy-D-xylulose 5-phosphate reductoisomerase from Nitrobacter winogradskyi (strain ATCC 25391 / DSM 10237 / CIP 104748 / NCIMB 11846 / Nb-255).